A 405-amino-acid chain; its full sequence is Argininosuccinate synthase (405 aa).

8 to 16 (AYSGGLDTS) contacts ATP. L-citrulline is bound by residues Y86 and S91. G116 contacts ATP. L-aspartate-binding residues include T118, N122, and D123. Residue N122 coordinates L-citrulline. L-citrulline contacts are provided by R126, S175, S184, E260, and Y272.

The protein belongs to the argininosuccinate synthase family. Type 1 subfamily. Homotetramer.

The protein localises to the cytoplasm. It catalyses the reaction L-citrulline + L-aspartate + ATP = 2-(N(omega)-L-arginino)succinate + AMP + diphosphate + H(+). It participates in amino-acid biosynthesis; L-arginine biosynthesis; L-arginine from L-ornithine and carbamoyl phosphate: step 2/3. In Koribacter versatilis (strain Ellin345), this protein is Argininosuccinate synthase.